Reading from the N-terminus, the 235-residue chain is LexA repressor (235 aa).

A DNA-binding region (H-T-H motif) is located at residues 26–46; the sequence is FDEMKEALDLASKSGIHRLIT. The interval 72 to 104 is disordered; it reads QATTAAPPKGRGAFRPQVLEGGGQAPTTSAQPQ. Catalysis depends on for autocatalytic cleavage activity residues Ser-156 and Lys-193.

Belongs to the peptidase S24 family. In terms of assembly, homodimer.

The catalysed reaction is Hydrolysis of Ala-|-Gly bond in repressor LexA.. Its function is as follows. Represses a number of genes involved in the response to DNA damage (SOS response), including recA and lexA. In the presence of single-stranded DNA, RecA interacts with LexA causing an autocatalytic cleavage which disrupts the DNA-binding part of LexA, leading to derepression of the SOS regulon and eventually DNA repair. This chain is LexA repressor, found in Caulobacter sp. (strain K31).